The primary structure comprises 260 residues: MARPGMERWRDRLALVTGASGGIGAAVARALVQQGLKVVGCARTVGNIEELAAECKSAGYPGTLIPYRCDLSNEEDILSMFSAIRSQHSGVDICINNAGLARPDTLLSGSTSGWKDMFNVNVLALSICTREAYQSMKERNVDDGHIININSMSGHRVLPLSVTHFYSATKYAVTALTEGLRQELREAQTHIRATCISPGVVETQFAFKLHDKDPEKAAATYEQMKCLKPEDVAEAVIYVLSTPAHIQIGDIQMRPTEQVT.

The first 30 residues, 1–30 (MARPGMERWRDRLALVTGASGGIGAAVARA), serve as a signal peptide directing secretion. NADP(+)-binding positions include 18 to 23 (GASGGI), 43 to 44 (RT), glutamate 49, 70 to 71 (DL), and asparagine 97. Positions 151 and 166 each coordinate substrate. NADP(+) is bound by residues tyrosine 166, lysine 170, 201 to 204 (VETQ), and lysine 208. Tyrosine 166 acts as the Proton acceptor in catalysis.

The protein belongs to the short-chain dehydrogenases/reductases (SDR) family. In terms of assembly, homotetramer. As to expression, isoform 1: Ubiquitously expressed, with highest levels in testis, small intestine, colon, kidney, brain and heart. Isoform 3: Expressed in brain, heart and skeletal muscle.

The protein resides in the secreted. It carries out the reaction a 3beta-hydroxysteroid + NADP(+) = a 3-oxosteroid + NADPH + H(+). The enzyme catalyses 17beta-estradiol + NAD(+) = estrone + NADH + H(+). It catalyses the reaction 17beta-estradiol + NADP(+) = estrone + NADPH + H(+). It functions in the pathway steroid biosynthesis; estrogen biosynthesis. Inhibited by flavonoids including apigenin, luteolin, genistein, kaempferol and quercetin and also by carbenoxolone, zearalenone, glycyrrhetinic, curcumin and flufenamic acid. In terms of biological role, catalyzes the conversion of the 17-keto group of estrone, 4- and 5-androstenes and 5-alpha-androstanes into their 17-beta-hydroxyl metabolites and the conversion of the 3-keto group of 3-, 3,17- and 3,20- diketosteroids into their 3-hydroxyl metabolites. Exhibits reductive 3-beta-hydroxysteroid dehydrogenase activity toward 5-beta-androstanes, 5-beta-pregnanes, 4-pregnenes and bile acids. May also reduce endogenous and exogenous alpha-dicarbonyl compounds and xenobiotic alicyclic ketones. The protein is Dehydrogenase/reductase SDR family member 11 (DHRS11) of Homo sapiens (Human).